A 298-amino-acid chain; its full sequence is ADP/ATP translocase 1 (298 aa).

Over 1–7 the chain is Mitochondrial intermembrane; it reads MSDQALS. Serine 2 carries the post-translational modification N-acetylserine. The stretch at 6–98 is one Solcar 1 repeat; that stretch reads LSFLKDFLAG…FAFKDKYKQI (93 aa). Residue serine 7 is modified to Phosphoserine. The helical transmembrane segment at 8–37 threads the bilayer; the sequence is FLKDFLAGGVAAAISKTAVAPIERVKLLLQ. Residues 38-74 are Mitochondrial matrix-facing; sequence VQHASKQISAEKQYKGIIDCVVRIPKEQGFLSFWRGN. Lysine 52 bears the N6,N6,N6-trimethyllysine mark. Position 52 is an N6-methyllysine (lysine 52). The helical transmembrane segment at 75–99 threads the bilayer; it reads LANVIRYFPTQALNFAFKDKYKQIF. ADP-binding residues include arginine 80 and lysine 92. Residues 100–109 lie on the Mitochondrial intermembrane side of the membrane; it reads LGGVDRHKQF. A helical membrane pass occupies residues 110-130; the sequence is WRYFAGNLASGGAAGATSLCF. Solcar repeat units follow at residues 111–201 and 212–297; these read RYFA…AKGM and VSWM…IKKF. At 131-178 the chain is on the mitochondrial matrix side; it reads VYPLDFARTRLAADVGKGAAQREFTGLGNCITKIFKSDGLRGLYQGFN. Lysine 147 is subject to N6-succinyllysine. Position 160 is an S-nitrosocysteine (cysteine 160). Residues 179-199 traverse the membrane as a helical segment; it reads VSVQGIIIYRAAYFGVYDTAK. Residues 200–210 lie on the Mitochondrial intermembrane side of the membrane; sequence GMLPDPKNVHI. A helical membrane pass occupies residues 211-231; sequence IVSWMIAQTVTAVAGLVSYPF. At 232–273 the chain is on the mitochondrial matrix side; it reads DTVRRRMMMQSGRKGADIMYTGTVDCWRKIAKDEGPKAFFKG. Residue arginine 235 coordinates ADP. The tract at residues 235–240 is important for transport activity; the sequence is RRRMMM. The short motif at 235–240 is the Nucleotide carrier signature motif element; sequence RRRMMM. N6-succinyllysine is present on residues lysine 245 and lysine 272. A helical transmembrane segment spans residues 274–291; it reads AWSNVLRGMGGAFVLVLY. Residues 292–298 are Mitochondrial intermembrane-facing; sequence DEIKKFV.

The protein belongs to the mitochondrial carrier (TC 2.A.29) family. As to quaternary structure, monomer. Found in a complex with ARL2, ARL2BP and SLC25A4/ANT1. Interacts with ARL2BP. Interacts with TIMM44; leading to inhibit the presequence translocase TIMM23, thereby promoting stabilization of PINK1. Post-translationally, under cell death induction, transglutaminated by TGM2. Transglutamination leads to formation of covalent cross-links between a glutamine and the epsilon-amino group of a lysine residue, forming polymers. Detected in heart muscle (at protein level). Detected in heart.

The protein localises to the mitochondrion inner membrane. The protein resides in the membrane. The enzyme catalyses ADP(in) + ATP(out) = ADP(out) + ATP(in). It catalyses the reaction H(+)(in) = H(+)(out). Its activity is regulated as follows. The matrix-open state (m-state) is inhibited by the membrane-permeable bongkrekic acid (BKA). The cytoplasmic-open state (c-state) is inhibited by the membrane-impermeable toxic inhibitor carboxyatractyloside (CATR). Proton transporter activity is inhibited by ADP:ATP antiporter activity. Functionally, ADP:ATP antiporter that mediates import of ADP into the mitochondrial matrix for ATP synthesis, and export of ATP out to fuel the cell. Cycles between the cytoplasmic-open state (c-state) and the matrix-open state (m-state): operates by the alternating access mechanism with a single substrate-binding site intermittently exposed to either the cytosolic (c-state) or matrix (m-state) side of the inner mitochondrial membrane. In addition to its ADP:ATP antiporter activity, also involved in mitochondrial uncoupling and mitochondrial permeability transition pore (mPTP) activity. Plays a role in mitochondrial uncoupling by acting as a proton transporter: proton transport uncouples the proton flows via the electron transport chain and ATP synthase to reduce the efficiency of ATP production and cause mitochondrial thermogenesis. Proton transporter activity is inhibited by ADP:ATP antiporter activity, suggesting that SLC25A4/ANT1 acts as a master regulator of mitochondrial energy output by maintaining a delicate balance between ATP production (ADP:ATP antiporter activity) and thermogenesis (proton transporter activity). Proton transporter activity requires free fatty acids as cofactor, but does not transport it. Probably mediates mitochondrial uncoupling in tissues that do not express UCP1. Also plays a key role in mPTP opening, a non-specific pore that enables free passage of the mitochondrial membranes to solutes of up to 1.5 kDa, and which contributes to cell death. It is however unclear if SLC25A4/ANT1 constitutes a pore-forming component of mPTP or regulates it. Acts as a regulator of mitophagy independently of ADP:ATP antiporter activity: promotes mitophagy via interaction with TIMM44, leading to inhibit the presequence translocase TIMM23, thereby promoting stabilization of PINK1. This is ADP/ATP translocase 1 from Bos taurus (Bovine).